The sequence spans 202 residues: UPF0316 protein SH1041 (202 aa).

3 helical membrane-spanning segments follow: residues 8–28, 40–60, and 66–86; these read PWSMVLAIFVINVFYVTFLTM, MAAAVSFLEVLVYVVGLGMVM, and IQNIFAYAFGFSIGILVGMKI.

The protein belongs to the UPF0316 family.

It is found in the cell membrane. This is UPF0316 protein SH1041 from Staphylococcus haemolyticus (strain JCSC1435).